The sequence spans 188 residues: Elongation factor P (188 aa).

It belongs to the elongation factor P family.

The protein resides in the cytoplasm. It participates in protein biosynthesis; polypeptide chain elongation. Its function is as follows. Involved in peptide bond synthesis. Stimulates efficient translation and peptide-bond synthesis on native or reconstituted 70S ribosomes in vitro. Probably functions indirectly by altering the affinity of the ribosome for aminoacyl-tRNA, thus increasing their reactivity as acceptors for peptidyl transferase. This is Elongation factor P from Pelodictyon phaeoclathratiforme (strain DSM 5477 / BU-1).